The sequence spans 291 residues: Probable prolyl 4-hydroxylase 12 (291 aa).

Topologically, residues 1 to 156 are cytoplasmic; that stretch reads MACLSRIFLI…GEEPSSVLHE (156 aa). Residues 125–239 form the Fe2OG dioxygenase domain; it reads NGGSIKVRSY…LLVATKLIYA (115 aa). Positions 142 and 144 each coordinate Fe cation. Residues 157 to 173 traverse the membrane as a helical; Signal-anchor for type II membrane protein segment; the sequence is SLLATVVLYLSNTTQGG. Over 174 to 291 the chain is Lumenal; the sequence is ELLFPNSEMK…GTCRKSCNAC (118 aa). N-linked (GlcNAc...) asparagine glycosylation occurs at asparagine 211. Residue histidine 220 coordinates Fe cation. The ShKT domain maps to 251–291; it reads CSDEDENCGRWAKLGECKKNPVYMIGSPDYYGTCRKSCNAC. 3 disulfide bridges follow: cysteine 251–cysteine 291, cysteine 258–cysteine 284, and cysteine 267–cysteine 288.

Belongs to the P4HA family. Fe(2+) serves as cofactor. Requires L-ascorbate as cofactor.

It is found in the endoplasmic reticulum membrane. It carries out the reaction L-prolyl-[collagen] + 2-oxoglutarate + O2 = trans-4-hydroxy-L-prolyl-[collagen] + succinate + CO2. In terms of biological role, catalyzes the post-translational formation of 4-hydroxyproline in -Xaa-Pro-Gly- sequences in proline-rich peptide sequences of plant glycoproteins and other proteins. Hydroxyprolines are important constituent of many plant cell wall glycoproteins such as extensins, hydroxyproline-rich glycoproteins, lectins and arabinogalactan proteins. This Arabidopsis thaliana (Mouse-ear cress) protein is Probable prolyl 4-hydroxylase 12.